The sequence spans 520 residues: 2-isopropylmalate synthase (520 aa).

The Pyruvate carboxyltransferase domain occupies 5 to 268 (VYIFDTTLRD…YTDVNTKEIY (264 aa)). Asp-14, His-202, His-204, and Asn-238 together coordinate Mn(2+). A regulatory domain region spans residues 394–520 (KVLHFQVQSG…RQEIREEGTV (127 aa)).

The protein belongs to the alpha-IPM synthase/homocitrate synthase family. LeuA type 1 subfamily. In terms of assembly, homodimer. Mn(2+) serves as cofactor.

Its subcellular location is the cytoplasm. The catalysed reaction is 3-methyl-2-oxobutanoate + acetyl-CoA + H2O = (2S)-2-isopropylmalate + CoA + H(+). The protein operates within amino-acid biosynthesis; L-leucine biosynthesis; L-leucine from 3-methyl-2-oxobutanoate: step 1/4. Its function is as follows. Catalyzes the condensation of the acetyl group of acetyl-CoA with 3-methyl-2-oxobutanoate (2-ketoisovalerate) to form 3-carboxy-3-hydroxy-4-methylpentanoate (2-isopropylmalate). This is 2-isopropylmalate synthase from Aquifex aeolicus (strain VF5).